The following is a 112-amino-acid chain: ATP synthase subunit c (112 aa).

2 helical membrane passes run 36-56 (FSVLAAGLGLGVAALGGAIGM) and 81-101 (MFIALAMIEAQVIYALVIALI).

It belongs to the ATPase C chain family. As to quaternary structure, F-type ATPases have 2 components, F(1) - the catalytic core - and F(0) - the membrane proton channel. F(1) has five subunits: alpha(3), beta(3), gamma(1), delta(1), epsilon(1). F(0) has three main subunits: a(1), b(2) and c(10-14). The alpha and beta chains form an alternating ring which encloses part of the gamma chain. F(1) is attached to F(0) by a central stalk formed by the gamma and epsilon chains, while a peripheral stalk is formed by the delta and b chains.

The protein resides in the cell inner membrane. F(1)F(0) ATP synthase produces ATP from ADP in the presence of a proton or sodium gradient. F-type ATPases consist of two structural domains, F(1) containing the extramembraneous catalytic core and F(0) containing the membrane proton channel, linked together by a central stalk and a peripheral stalk. During catalysis, ATP synthesis in the catalytic domain of F(1) is coupled via a rotary mechanism of the central stalk subunits to proton translocation. In terms of biological role, key component of the F(0) channel; it plays a direct role in translocation across the membrane. A homomeric c-ring of between 10-14 subunits forms the central stalk rotor element with the F(1) delta and epsilon subunits. This is ATP synthase subunit c from Campylobacter jejuni (strain RM1221).